Reading from the N-terminus, the 328-residue chain is Sulfate adenylyltransferase subunit 2 (328 aa).

Disordered regions lie at residues 15–34 (AAPD…PSSH) and 304–328 (SERE…EGYF).

This sequence belongs to the PAPS reductase family. CysD subfamily. In terms of assembly, heterodimer composed of CysD, the smaller subunit, and CysN.

The catalysed reaction is sulfate + ATP + H(+) = adenosine 5'-phosphosulfate + diphosphate. It participates in sulfur metabolism; hydrogen sulfide biosynthesis; sulfite from sulfate: step 1/3. With CysN forms the ATP sulfurylase (ATPS) that catalyzes the adenylation of sulfate producing adenosine 5'-phosphosulfate (APS) and diphosphate, the first enzymatic step in sulfur assimilation pathway. APS synthesis involves the formation of a high-energy phosphoric-sulfuric acid anhydride bond driven by GTP hydrolysis by CysN coupled to ATP hydrolysis by CysD. This chain is Sulfate adenylyltransferase subunit 2, found in Rhodopseudomonas palustris (strain BisA53).